The sequence spans 119 residues: Large ribosomal subunit protein uL18 (119 aa).

The protein belongs to the universal ribosomal protein uL18 family. As to quaternary structure, part of the 50S ribosomal subunit; part of the 5S rRNA/L5/L18/L25 subcomplex. Contacts the 5S and 23S rRNAs.

Its function is as follows. This is one of the proteins that bind and probably mediate the attachment of the 5S RNA into the large ribosomal subunit, where it forms part of the central protuberance. The polypeptide is Large ribosomal subunit protein uL18 (Mesorhizobium japonicum (strain LMG 29417 / CECT 9101 / MAFF 303099) (Mesorhizobium loti (strain MAFF 303099))).